We begin with the raw amino-acid sequence, 486 residues long: Protein DETOXIFICATION 16 (486 aa).

The next 12 membrane-spanning stretches (helical) occupy residues 35–55, 68–88, 117–137, 142–162, 179–199, 207–227, 259–279, 288–308, 331–351, 365–385, 401–421, and 433–453; these read GPLI…VMFV, IATS…ASAL, LASI…VFFG, IATL…AYGL, VVFC…VLVF, GAAL…FCYV, ALMV…SGLL, VLSI…GLSG, RVVI…LILI, VVSY…LDSL, IGAI…GLLL, and WLGI…VTIF.

It belongs to the multi antimicrobial extrusion (MATE) (TC 2.A.66.1) family.

It localises to the membrane. In Arabidopsis thaliana (Mouse-ear cress), this protein is Protein DETOXIFICATION 16.